Reading from the N-terminus, the 1650-residue chain is MATSLTSQLENLRTSAARHLTVEKRHVSLLFDRKEANKLSNETAHRIGVAGLEQMKRIDPVFDTEFANDLFSEERVDFVRSMLEKGANEELNKQIEKLLLELSPYLQHFACQQVLEFLIHTYQIYSFNAETLLLTFLPFHETKVYSRLLRILDFDWKRSKEWQFMQQFTKTETPIPFTSIARATLSSKHSIITCITDHIRHAVEIVGSDYLEIKHPILFNFHAKLLLSMFTDPEKVDEMMLAKLMPFIENGIKSPMKSFRYSAMVVISQLVLTVKLKDEVLNSMCKLLITKMRSDTAAASLSTLMVVFQQQNVQSLSKNTLKKLLRHEEGIDVWKILKELSERTDTTKFFNVLWKELIVLSKDAESEDNTLAIDVLIETIEDASILTGDQAGTILKLILQEGMDGNIFDNKKKLKSNIRAIGMRFAKQFDAIHAELKAKDKKTLKNVLKEYQIEDIVQFASEAVAATQSEESIEIISEEAPSSKKIKLTASEKAQKLAQSSEFAKREVFSGDPINKATEWLNGEKWDKVEWALNEMAQRGEKYFSRKVEDDVEQFVLEIVKVVGVGGVKQIDGGSVKAALAGANLNPQFVADLLTKFDGVSEIAPKRTKGAQKKNLVEKTFGTEESWEAFNQRVVFVLDLLNARQIIPSSEKVLAALFAVVKQVNSKSDVESSSYQQHLAVNAIRKILEHPEKTKIGASEVDMDCVIETMRSTHNHHLLRDCLRLIVAAAKHTPNSVVKHVMSVFTFMGNGMLRKDNELTLSIVEKTVESLFSTIINSSGQAVLTKQQQTEKLIELARLFAASAIDIPAHRRARIAQAIARAVQAENASTVVLVLVSSFCARWQRSSDAAAQEAMKRGSDQDAYDDLAIELLSALNPFEQLSSVLEMCEYVRRLGGDKPAKSTTTKKDLDTMIFDRTAQTLPRIRHFRYVVVTLISRIFSNRVLIERLAAYDDEELLKNALPLGKRLIECSVELDEFANKEANDQDGSDPQAQRYWVAFASRTEVVSEKLRHLLPGGVAARLIADVLQECVNDKKMSYKMCEKVLQLANIKLGHDRYLFADSGINEKELITLAQALNKFIVAETKSEEKMRMCQNSAYTLKLIAKNLPSQSESLVLADTMQRCVSIVSQYQKLDENLTGNVLLLAGELIRSHNMRSTIHHATSLLKTCLATVQECIARFSKPQYDSAASPGSSVAGGRGNRGHRIRQQSLGGNKFGSDTLLICSLTCIQRVYDQFASFVVESTGDVIIRYCRLIARFGDPSELLALNQPSSSTTAAFQGGSQTSGFGSKTGIHHRLSLIRRSLLSIELRVLPAHIVKTVGELKTEKKALSALFNLLTGYIETQHQQKPEILRKSVIQLRRTFVSDVITPTLIVRSQERQSDQFENVEKLEHTVFNFVISIASILSEVEFRTVVNELVAWAEPGLEAKADLAARLRLVSLLHFANDLYTSFNSLALPYFGRILEISALVLKKCNATLLLGTDELLLSGKRGSIEALETDLALTLAIDVISNAARHRDFFTVDRCQLVSDVIVNELVNTKVEGHEKRCSDHLVPAIYRIGNADPDSFPELLNKIMLKTRDSRAKIRYRALIVLELLIKEIGDGVQPHLSILLPFLNELIEDENKQVEAQCQKVINSLQHKFGETFWSGGSSA.

Residues glutamine 1183 to leucine 1210 are disordered. Residues leucine 1609 to serine 1645 form an HEAT repeat.

Belongs to the HEATR1/UTP10 family.

It is found in the nucleus. Its subcellular location is the nucleolus. Involved in nucleolar processing of pre-18S ribosomal RNA. Involved in ribosome biosynthesis. The chain is HEAT repeat-containing protein 1 homolog (toe-1) from Caenorhabditis elegans.